The sequence spans 389 residues: 1-deoxy-D-xylulose 5-phosphate reductoisomerase (389 aa).

Positions 11, 12, 13, 14, 39, and 122 each coordinate NADPH. Position 123 (lysine 123) interacts with 1-deoxy-D-xylulose 5-phosphate. Glutamate 124 is a binding site for NADPH. Aspartate 148 provides a ligand contact to Mn(2+). Positions 149, 150, 174, and 197 each coordinate 1-deoxy-D-xylulose 5-phosphate. Glutamate 150 is a binding site for Mn(2+). Position 203 (glycine 203) interacts with NADPH. Residues serine 210, asparagine 215, lysine 216, and glutamate 219 each contribute to the 1-deoxy-D-xylulose 5-phosphate site. Glutamate 219 lines the Mn(2+) pocket.

This sequence belongs to the DXR family. The cofactor is Mg(2+). Mn(2+) is required as a cofactor.

The catalysed reaction is 2-C-methyl-D-erythritol 4-phosphate + NADP(+) = 1-deoxy-D-xylulose 5-phosphate + NADPH + H(+). The protein operates within isoprenoid biosynthesis; isopentenyl diphosphate biosynthesis via DXP pathway; isopentenyl diphosphate from 1-deoxy-D-xylulose 5-phosphate: step 1/6. In terms of biological role, catalyzes the NADPH-dependent rearrangement and reduction of 1-deoxy-D-xylulose-5-phosphate (DXP) to 2-C-methyl-D-erythritol 4-phosphate (MEP). The chain is 1-deoxy-D-xylulose 5-phosphate reductoisomerase from Leptospira interrogans serogroup Icterohaemorrhagiae serovar Lai (strain 56601).